The chain runs to 393 residues: Flap endonuclease 1 (393 aa).

The segment at 1–108 (MGILGLSKLL…SELQERRQRA (108 aa)) is N-domain. D34 lines the Mg(2+) pocket. Position 74 (R74) interacts with DNA. Mg(2+) contacts are provided by D90, E162, E164, D183, and D185. Positions 126-257 (LMEKMSKRTV…QKAWEGIKKH (132 aa)) are I-domain. A DNA-binding site is contributed by E162. DNA-binding residues include G235 and D237. Position 237 (D237) interacts with Mg(2+). Residues 340–348 (TQGRLDQFF) form an interaction with PCNA region.

The protein belongs to the XPG/RAD2 endonuclease family. FEN1 subfamily. As to quaternary structure, interacts with PCNA. Three molecules of FEN1 bind to one PCNA trimer with each molecule binding to one PCNA monomer. PCNA stimulates the nuclease activity without altering cleavage specificity. Mg(2+) is required as a cofactor. Phosphorylated. Phosphorylation upon DNA damage induces relocalization to the nuclear plasma.

The protein resides in the nucleus. It localises to the nucleolus. The protein localises to the nucleoplasm. Its subcellular location is the mitochondrion. Structure-specific nuclease with 5'-flap endonuclease and 5'-3' exonuclease activities involved in DNA replication and repair. During DNA replication, cleaves the 5'-overhanging flap structure that is generated by displacement synthesis when DNA polymerase encounters the 5'-end of a downstream Okazaki fragment. It enters the flap from the 5'-end and then tracks to cleave the flap base, leaving a nick for ligation. Also involved in the long patch base excision repair (LP-BER) pathway, by cleaving within the apurinic/apyrimidinic (AP) site-terminated flap. Acts as a genome stabilization factor that prevents flaps from equilibrating into structures that lead to duplications and deletions. Also possesses 5'-3' exonuclease activity on nicked or gapped double-stranded DNA, and exhibits RNase H activity. Also involved in replication and repair of rDNA and in repairing mitochondrial DNA. In Trypanosoma cruzi (strain CL Brener), this protein is Flap endonuclease 1.